The following is a 104-amino-acid chain: Cell division protein FtsL (104 aa).

Topologically, residues 1–19 are cytoplasmic; that stretch reads MSTPNTHLLCLIATDLRKH. Residues 20-39 traverse the membrane as a helical segment; sequence FFAVLVGMLIVCSAIYNVYT. The Periplasmic segment spans residues 40–104; sequence THKTRGLVTQ…KKNSVLVELR (65 aa).

Belongs to the FtsL family. Part of a complex composed of FtsB, FtsL and FtsQ.

Its subcellular location is the cell inner membrane. In terms of biological role, essential cell division protein. May link together the upstream cell division proteins, which are predominantly cytoplasmic, with the downstream cell division proteins, which are predominantly periplasmic. This is Cell division protein FtsL from Psychromonas ingrahamii (strain DSM 17664 / CCUG 51855 / 37).